Here is a 206-residue protein sequence, read N- to C-terminus: Ras-related protein Rab-18 (206 aa).

GTP is bound by residues Ser17, Gly20, Lys21, Ser22, Ser23, Asp34, Pro35, Thr40, Gly66, Lys123, Asp125, and Ala152. Mg(2+) is bound at residue Ser22. 2 short sequence motifs (switch) span residues Asp31–Phe45 and Asp63–Gly80. Residue Thr40 coordinates Mg(2+). Residue Cys199 is the site of S-palmitoyl cysteine attachment. The residue at position 203 (Cys203) is a Cysteine methyl ester. A lipid anchor (S-geranylgeranyl cysteine) is attached at Cys203. The propeptide at Ser204–Leu206 is removed in mature form.

Belongs to the small GTPase superfamily. Rab family. Requires Mg(2+) as cofactor.

Its subcellular location is the endoplasmic reticulum membrane. The protein resides in the golgi apparatus. The protein localises to the cis-Golgi network membrane. It localises to the lipid droplet. It is found in the apical cell membrane. The enzyme catalyses GTP + H2O = GDP + phosphate + H(+). Regulated by guanine nucleotide exchange factors (GEFs) which promote the exchange of bound GDP for free GTP. Regulated by GTPase activating proteins (GAPs) which increase the GTP hydrolysis activity at the ER membrane. Inhibited by GDP dissociation inhibitors (GDIs) which prevent Rab-GDP dissociation. In terms of biological role, the small GTPases Rab are key regulators of intracellular membrane trafficking, from the formation of transport vesicles to their fusion with membranes. Rabs cycle between an inactive GDP-bound form and an active GTP-bound form that is able to recruit to membranes different sets of downstream effectors directly responsible for vesicle formation, movement, tethering and fusion. RAB18 is required for the localization of ZFYVE1 to lipid droplets and for its function in mediating the formation of endoplasmic reticulum-lipid droplets (ER-LD) contacts. Also required for maintaining endoplasmic reticulum structure. Plays a role in apical endocytosis/recycling. Plays a key role in eye and brain development and neurodegeneration. The chain is Ras-related protein Rab-18 (RAB18) from Gallus gallus (Chicken).